A 329-amino-acid polypeptide reads, in one-letter code: Ephrin-B1 (329 aa).

Positions methionine 1–alanine 20 are cleaved as a signal peptide. Over leucine 21–alanine 226 the chain is Extracellular. The Ephrin RBD domain occupies lysine 23 to valine 157. 2 cysteine pairs are disulfide-bonded: cysteine 57–cysteine 94 and cysteine 82–cysteine 146. The N-linked (GlcNAc...) asparagine glycan is linked to asparagine 132. A disordered region spans residues alanine 163–glycine 192. The N-linked (GlcNAc...) asparagine glycan is linked to asparagine 203. Residues alanine 227–isoleucine 247 traverse the membrane as a helical segment. The Cytoplasmic segment spans residues lysine 248 to valine 329. The PDZ-binding motif lies at tyrosine 327–valine 329.

It belongs to the ephrin family. Interacts with TLE4 through the PDZ-binding motif. Inducible phosphorylation of tyrosine residues in the cytoplasmic domain. Tyrosine phosphorylation inhibits TLE4-binding. In terms of tissue distribution, expressed at low levels in most tissues with highest levels in the kidney, oocytes, ovary and testis.

The protein localises to the membrane. In terms of biological role, cell surface transmembrane ligand for Eph receptors, a family of receptor tyrosine kinases which are crucial for migration, repulsion and adhesion during neuronal, vascular and epithelial development. Binds promiscuously Eph receptors residing on adjacent cells, leading to contact-dependent bidirectional signaling into neighboring cells. The signaling pathway downstream of the receptor is referred to as forward signaling while the signaling pathway downstream of the ephrin ligand is referred to as reverse signaling. May have a role in the developing mesenchymal and nervous tissue. This Xenopus laevis (African clawed frog) protein is Ephrin-B1 (efnb1).